The following is a 330-amino-acid chain: MSYFDNYFNEIVNSVNDIIKSYISGDVPKLYEASYHLFTSGGKRLRPLILTISSDLFGGQRERAYYAGAAIEVLHTFTLVHDDIMDQDNIRRGLPTVHVKYGLPLAILAGDLLHAKAFQLLTQALRGLPSETIIKAFDIFTRSIIIISEGQAVDMEFEDRIDIKEQEYLDMISRKTAALFSASSSIGALIAGANDNDVRLMSDFGTNLGIAFQIVDDILGLTADEKELGKPVFSDIREGKKTILVIKTLELCKEDEKKIVLKALGNKSASKEELMSSADIIKKYSLDYAYNLAEKYYKNAIDSLNQVSSKSDIPGKALKYLAEFTIRRRK.

Residues lysine 43, arginine 46, and histidine 75 each coordinate isopentenyl diphosphate. The Mg(2+) site is built by aspartate 82 and aspartate 86. Arginine 91 contacts an all-trans-polyprenyl diphosphate. Residue arginine 92 participates in isopentenyl diphosphate binding. Residues lysine 175, threonine 176, glutamine 213, lysine 230, and lysine 240 each coordinate an all-trans-polyprenyl diphosphate.

This sequence belongs to the FPP/GGPP synthase family. It depends on Mg(2+) as a cofactor.

The catalysed reaction is isopentenyl diphosphate + (2E,6E)-farnesyl diphosphate = (2E,6E,10E)-geranylgeranyl diphosphate + diphosphate. The protein operates within isoprenoid biosynthesis; geranylgeranyl diphosphate biosynthesis; geranylgeranyl diphosphate from farnesyl diphosphate and isopentenyl diphosphate: step 1/1. Its function is as follows. Catalyzes the condensation of isopentenyl pyrophosphate with the allylic pyrophosphates to yield geranylgeranyl diphosphate (GGPP) which is a precursor of the ether-linked lipids. It is able to use dimethylallyl diphosphate (DMAPP), geranyl diphosphate (GPP), and (all-E)-geranyl diphosphate (E-FPP) as an allylic substrate. The protein is Geranylgeranyl diphosphate synthase (gds) of Sulfolobus acidocaldarius (strain ATCC 33909 / DSM 639 / JCM 8929 / NBRC 15157 / NCIMB 11770).